The chain runs to 697 residues: Polyribonucleotide nucleotidyltransferase (697 aa).

Asp-487 and Asp-493 together coordinate Mg(2+). Residues 554-613 form the KH domain; the sequence is PRIETIQIKPSKIAVVIGPGGKQIRAIIEQTGVQIDIDDTGLVNIAAIDLVSIEKAKAII. Residues 623 to 691 enclose the S1 motif domain; sequence GRIYSGKAIS…ERGQIKLSRK (69 aa).

The protein belongs to the polyribonucleotide nucleotidyltransferase family. Mg(2+) serves as cofactor.

The protein resides in the cytoplasm. It carries out the reaction RNA(n+1) + phosphate = RNA(n) + a ribonucleoside 5'-diphosphate. Involved in mRNA degradation. Catalyzes the phosphorolysis of single-stranded polyribonucleotides processively in the 3'- to 5'-direction. The chain is Polyribonucleotide nucleotidyltransferase from Protochlamydia amoebophila (strain UWE25).